Reading from the N-terminus, the 187-residue chain is Preprocaerulein clone PXC202 (187 aa).

A propeptide spanning residues 1–9 is cleaved from the precursor; sequence NDERRFADG. Residues 1–21 are disordered; the sequence is NDERRFADGQQDYTGWMDFGR. Tyr13 carries the sulfotyrosine modification. Residue Phe19 is modified to Phenylalanine amide. Positions 23 to 73 are excised as a propeptide; the sequence is DDEDDVNERDVRGFGSFLGKALKAALKIGANALGGSPQQREANDERRFADG. Position 77 is a sulfotyrosine (Tyr77). Phe83 bears the Phenylalanine amide mark. Residues 87-137 constitute a propeptide that is removed on maturation; that stretch reads DDEDDVNERDVRGFGSFLGKALKAALKIGANALGGSLQQREVNDERRFADG. Tyr141 carries the post-translational modification Sulfotyrosine. Phe147 carries the post-translational modification Phenylalanine amide. Positions 151-152 are excised as a propeptide; sequence DG. The residue at position 156 (Tyr156) is a Sulfotyrosine. Phe162 bears the Phenylalanine amide mark. Positions 166-187 are excised as a propeptide; that stretch reads DDEDDVHERDVRGFGSFLGKAL.

It belongs to the gastrin/cholecystokinin family. As to expression, expressed by the skin glands.

It is found in the secreted. The pharmacological activities of caerulein are quite similar to the physiological activities of gastrin and related peptides. The chain is Preprocaerulein clone PXC202 from Xenopus laevis (African clawed frog).